Here is a 274-residue protein sequence, read N- to C-terminus: 2,3,4,5-tetrahydropyridine-2,6-dicarboxylate N-succinyltransferase (274 aa).

2 residues coordinate substrate: Arg105 and Asp142.

It belongs to the transferase hexapeptide repeat family. In terms of assembly, homotrimer.

It is found in the cytoplasm. The catalysed reaction is (S)-2,3,4,5-tetrahydrodipicolinate + succinyl-CoA + H2O = (S)-2-succinylamino-6-oxoheptanedioate + CoA. It functions in the pathway amino-acid biosynthesis; L-lysine biosynthesis via DAP pathway; LL-2,6-diaminopimelate from (S)-tetrahydrodipicolinate (succinylase route): step 1/3. The sequence is that of 2,3,4,5-tetrahydropyridine-2,6-dicarboxylate N-succinyltransferase from Methylobacillus flagellatus (strain ATCC 51484 / DSM 6875 / VKM B-1610 / KT).